A 382-amino-acid polypeptide reads, in one-letter code: Regulatory protein RapC (382 aa).

5 TPR repeats span residues 102–138 (YYVN…VADH), 149–182 (AEAY…NVRI), 183–216 (IQCH…AQAE), 223–256 (GRAY…FESS), and 263–296 (PQAY…AKET).

This sequence belongs to the Rap family. In terms of assembly, homodimer. Interacts specifically with the C-terminal DNA-binding domain of ComA. Interacts with CSF.

The protein resides in the cytoplasm. With respect to regulation, inhibited by the competence and sporulation stimulating factor (CSF), encoded by phrC, which prevents RapC-ComA interaction. In terms of biological role, involved in the regulation of genetic competence development. Inhibits the activity of ComA, a transcriptional factor that regulates the development of genetic competence. Acts by binding to ComA, independently of its phosphorylation state, leading to the inhibition of ComA DNA-binding activity. Does not dephosphorylate phospho-ComA and does not affect the phosphorylation level of the ComP-ComA system. The chain is Regulatory protein RapC (rapC) from Bacillus subtilis (strain 168).